A 450-amino-acid polypeptide reads, in one-letter code: F-box/FBD/LRR-repeat protein At5g22660 (450 aa).

The F-box domain occupies 12-58 (EDRISSLPDHLLSQILSNLPTENAVTTSILSTRWKDLWLSTPVLDID). 2 LRR repeats span residues 157 to 181 (LPNLKVMHLEENIYSYAETMEKFIS) and 294 to 317 (LSSLRDMTISGTTLKIICHYLKHE). Residues 364-416 (EEISLSSSVPKCLQSSLENVEIIRPNYGSGEEMKLSKYFLENSLVLKKFKLCR) enclose the FBD domain.

This is F-box/FBD/LRR-repeat protein At5g22660 from Arabidopsis thaliana (Mouse-ear cress).